The primary structure comprises 87 residues: MVNMEASMFLTFAGLVLLFVVCYASESEEKEFPKEMLSSIFAVDNDFKQEERDCAGYMRECKEKLCCSGYVCSSGWKWCVLPAPWRR.

The N-terminal stretch at 1 to 24 is a signal peptide; the sequence is MVNMEASMFLTFAGLVLLFVVCYA. Positions 25–52 are excised as a propeptide; it reads SESEEKEFPKEMLSSIFAVDNDFKQEER. Disulfide bonds link Cys54-Cys67, Cys61-Cys72, and Cys66-Cys79.

Belongs to the neurotoxin 10 (Hwtx-1) family. 51 (Hntx-8) subfamily. Hntx-8 sub-subfamily. In terms of tissue distribution, expressed by the venom gland.

It localises to the secreted. Functionally, ion channel inhibitor. The protein is U3-theraphotoxin-Hhn1i of Cyriopagopus hainanus (Chinese bird spider).